A 239-amino-acid polypeptide reads, in one-letter code: tRNA (guanine-N(7)-)-methyltransferase (239 aa).

S-adenosyl-L-methionine is bound by residues Glu-69, Glu-94, Asp-121, and Asp-144. Residue Asp-144 is part of the active site. Lys-148 is a substrate binding site. An interaction with RNA region spans residues 150–155; sequence RHNKRR. Residues Asp-180 and 217 to 220 each bind substrate; that span reads TKFE.

This sequence belongs to the class I-like SAM-binding methyltransferase superfamily. TrmB family. Monomer.

The enzyme catalyses guanosine(46) in tRNA + S-adenosyl-L-methionine = N(7)-methylguanosine(46) in tRNA + S-adenosyl-L-homocysteine. It functions in the pathway tRNA modification; N(7)-methylguanine-tRNA biosynthesis. In terms of biological role, catalyzes the formation of N(7)-methylguanine at position 46 (m7G46) in tRNA. The protein is tRNA (guanine-N(7)-)-methyltransferase of Salmonella paratyphi A (strain ATCC 9150 / SARB42).